The primary structure comprises 185 residues: TATA-box-binding protein 3 (185 aa).

Tandem repeats lie at residues 7-84 (IENV…ANTL) and 100-178 (VQNI…KTEF).

Belongs to the TBP family.

In terms of biological role, general factor that plays a role in the activation of archaeal genes transcribed by RNA polymerase. Binds specifically to the TATA box promoter element which lies close to the position of transcription initiation. This is TATA-box-binding protein 3 from Methanosarcina mazei (strain ATCC BAA-159 / DSM 3647 / Goe1 / Go1 / JCM 11833 / OCM 88) (Methanosarcina frisia).